The following is a 112-amino-acid chain: Colipase (112 aa).

An N-terminal signal peptide occupies residues 1–17 (MEKVLILLLVALAVAYA). Positions 18-22 (VPDPR) are cleaved as a propeptide — enterostatin, activation peptide. Intrachain disulfides connect C34–C45, C40–C56, C44–C78, C66–C86, and C80–C104.

Belongs to the colipase family. As to quaternary structure, forms a 1:1 stoichiometric complex with pancreatic lipase.

Its subcellular location is the secreted. Colipase is a cofactor of pancreatic lipase. It allows the lipase to anchor itself to the lipid-water interface. Without colipase the enzyme is washed off by bile salts, which have an inhibitory effect on the lipase. In terms of biological role, enterostatin has a biological activity as a satiety signal. This is Colipase (CLPS) from Bos taurus (Bovine).